We begin with the raw amino-acid sequence, 527 residues long: Sensory neuron membrane protein 1 (527 aa).

Residues 1–10 (MQLQKPLKIG) lie on the Cytoplasmic side of the membrane. A helical membrane pass occupies residues 11–31 (LGMMGAGLFGIIFGWVLFPVI). The Extracellular segment spans residues 32-456 (LKSQLKKEMA…LKNQLFIPKR (425 aa)). Residues Asn67 and Asn229 are each glycosylated (N-linked (GlcNAc...) asparagine). Intrachain disulfides connect Cys268–Cys333, Cys297–Cys352, and Cys335–Cys341. The N-linked (GlcNAc...) asparagine glycan is linked to Asn440. The helical transmembrane segment at 457 to 477 (IVSVVKWLLAGVGFVGLVGSL) threads the bilayer. Topologically, residues 478-527 (VYQFKGKMINFALSPSSAPVTKVNPEINQQNQPKDISIIGESQNPPKVDM) are cytoplasmic.

The protein belongs to the CD36 family. In terms of tissue distribution, principal component of the olfactory cilia membrane. Localizes to the antennal tissue with two to three fold higher expression in males compared to females.

It localises to the cell membrane. Plays an olfactory role that is not restricted to pheromone sensitivity. This chain is Sensory neuron membrane protein 1, found in Ostrinia nubilalis (European corn borer).